The sequence spans 100 residues: Large ribosomal subunit protein bL28 (100 aa).

Belongs to the bacterial ribosomal protein bL28 family.

In Ehrlichia ruminantium (strain Welgevonden), this protein is Large ribosomal subunit protein bL28.